A 178-amino-acid chain; its full sequence is Small ribosomal subunit protein uS5 (178 aa).

In terms of domain architecture, S5 DRBM spans 15 to 78; that stretch reads FEEKIIEIRR…ADAKKNVIEV (64 aa).

Belongs to the universal ribosomal protein uS5 family. In terms of assembly, part of the 30S ribosomal subunit. Contacts proteins S4 and S8.

Functionally, with S4 and S12 plays an important role in translational accuracy. Located at the back of the 30S subunit body where it stabilizes the conformation of the head with respect to the body. This Thermotoga neapolitana (strain ATCC 49049 / DSM 4359 / NBRC 107923 / NS-E) protein is Small ribosomal subunit protein uS5.